A 1476-amino-acid chain; its full sequence is SH3 and multiple ankyrin repeat domains protein 2 (1476 aa).

A compositionally biased stretch (polar residues) spans Leu66–Ser76. Positions Leu66 to Phe134 are disordered. An SH3 domain is found at Val147–Cys206. Val162 is modified (phosphoserine). The 95-residue stretch at Thr247–Thr341 folds into the PDZ domain. Ser372 is modified (phosphoserine). The interval Arg391–Asn412 is disordered. At Ser456 the chain carries Phosphoserine. Thr485 is subject to Phosphothreonine. Residues Leu503–Cys533 are disordered. Pro residues predominate over residues Ile512–Pro528. Ser586 is subject to Phosphoserine. 3 disordered regions span residues Thr659–Arg916, Val946–Ala983, and Pro1057–Asp1153. Low complexity predominate over residues Ser666 to Ser678. Basic and acidic residues predominate over residues Val711–Arg722. At Ser724 the chain carries Phosphoserine. The span at Leu783–Gly795 shows a compositional bias: gly residues. Residues Arg833–Ser846 are compositionally biased toward low complexity. Basic and acidic residues-rich tracts occupy residues Ala847 to Leu868 and Arg899 to Arg916. The residue at position 903 (Thr903) is a Phosphothreonine. Positions Thr1070–Thr1085 are enriched in polar residues. The span at Val1119–Glu1130 shows a compositional bias: basic and acidic residues. The segment covering Thr1131 to Ser1151 has biased composition (low complexity). An SH3-binding motif is present at residues Pro1169–Pro1175. Disordered stretches follow at residues Glu1195 to Ala1216 and Asn1260 to Lys1403. Residues Ile1202–Gly1212 show a composition bias toward pro residues. Low complexity predominate over residues Ser1291–Val1305. The O-linked (GlcNAc) threonine glycan is linked to Thr1292. Polar residues predominate over residues Pro1307–Ser1317. Ser1334 and Ser1338 each carry phosphoserine. Positions Leu1364–Pro1375 are enriched in polar residues. Low complexity predominate over residues Arg1387–Ser1401. One can recognise an SAM domain in the interval Trp1413 to Arg1476.

This sequence belongs to the SHANK family. As to quaternary structure, is part of a complex with DLG4/PSD-95 and DLGAP1/GKAP. Interacts with CTTN/cortactin SH3 domain, DLGAP1/GKAP and alpha-latrotoxin receptor 1. Interacts with DNM2, DBNL, GRID2, BAIAP2, SLC9A3, PLCB3 and CFTR. Interacts (via proline-rich region) with PDE4D. Interacts with ABI1 (via SH3 domain). Detected in brain (at protein level), where it is highly expressed in Purkinje cells.

The protein localises to the apical cell membrane. Its subcellular location is the cytoplasm. It localises to the synapse. It is found in the postsynaptic density. The protein resides in the cell projection. The protein localises to the dendritic spine. Its subcellular location is the growth cone. In terms of biological role, seems to be an adapter protein in the postsynaptic density (PSD) of excitatory synapses that interconnects receptors of the postsynaptic membrane including NMDA-type and metabotropic glutamate receptors, and the actin-based cytoskeleton. May play a role in the structural and functional organization of the dendritic spine and synaptic junction. In Mus musculus (Mouse), this protein is SH3 and multiple ankyrin repeat domains protein 2 (Shank2).